Here is a 680-residue protein sequence, read N- to C-terminus: Epithelial splicing regulatory protein 1 (680 aa).

RRM domains lie at 224 to 301, 325 to 405, and 444 to 524; these read TVVR…KATG, VIVR…RSTA, and DCIR…QCSA. Residue Ser542 is modified to Phosphoserine. Omega-N-methylarginine is present on Arg581.

Belongs to the ESRP family. As to expression, epithelial cell-specific. Epithelial-specific expression in diverse tissues and organs with particularly notable levels of expression in skin and gastrointestinal epithelia.

It localises to the nucleus. MRNA splicing factor that regulates the formation of epithelial cell-specific isoforms. Specifically regulates the expression of FGFR2-IIIb, an epithelial cell-specific isoform of FGFR2. Also regulates the splicing of CD44, CTNND1, ENAH, 3 transcripts that undergo changes in splicing during the epithelial-to-mesenchymal transition (EMT). Acts by directly binding specific sequences in mRNAs. Binds the GU-rich sequence motifs in the ISE/ISS-3, a cis-element regulatory region present in the mRNA of FGFR2. Regulates splicing and expression of genes involved in inner ear development, auditory hair cell differentiation, and cell fate specification in the cochlear epithelium. This is Epithelial splicing regulatory protein 1 (Esrp1) from Mus musculus (Mouse).